The primary structure comprises 117 residues: Probable non-functional immunoglobulin kappa variable 1D-42 (117 aa).

Positions 1-22 are cleaved as a signal peptide; the sequence is MDMRVPAQLLGLLLLWLPGVRF. The interval 23–45 is framework-1; the sequence is DIQMTQSPSFLSASVGDRVSIIC. Residues 23 to 117 enclose the Ig-like domain; sequence DIQMTQSPSF…YYCKQDFSYP (95 aa). Cysteines 45 and 110 form a disulfide. The complementarity-determining-1 stretch occupies residues 46 to 56; it reads WASEGISSNLA. Residues 57 to 71 form a framework-2 region; it reads WYLQKPGKSPKLFLY. A complementarity-determining-2 region spans residues 72–78; that stretch reads DAKDLHP. The interval 79 to 110 is framework-3; the sequence is GVSSRFSGRGSGTDFTLTIISLKPEDFAAYYC. The segment at 111-117 is complementarity-determining-3; the sequence is KQDFSYP.

As to quaternary structure, immunoglobulins are composed of two identical heavy chains and two identical light chains; disulfide-linked.

The protein resides in the secreted. It localises to the cell membrane. Probable non-functional open reading frame (ORF) of V region of the variable domain of immunoglobulin light chains. Non-functional ORF generally cannot participate in the synthesis of a productive immunoglobulin chain due to altered V-(D)-J or switch recombination and/or splicing site (at mRNA level) and/or conserved amino acid change (protein level). Immunoglobulins, also known as antibodies, are membrane-bound or secreted glycoproteins produced by B lymphocytes. In the recognition phase of humoral immunity, the membrane-bound immunoglobulins serve as receptors which, upon binding of a specific antigen, trigger the clonal expansion and differentiation of B lymphocytes into immunoglobulins-secreting plasma cells. Secreted immunoglobulins mediate the effector phase of humoral immunity, which results in the elimination of bound antigens. The antigen binding site is formed by the variable domain of one heavy chain, together with that of its associated light chain. Thus, each immunoglobulin has two antigen binding sites with remarkable affinity for a particular antigen. The variable domains are assembled by a process called V-(D)-J rearrangement and can then be subjected to somatic hypermutations which, after exposure to antigen and selection, allow affinity maturation for a particular antigen. The protein is Probable non-functional immunoglobulin kappa variable 1D-42 of Homo sapiens (Human).